The following is a 287-amino-acid chain: 4-hydroxybenzoate octaprenyltransferase (287 aa).

The next 6 helical transmembrane spans lie at 41 to 61, 89 to 109, 133 to 153, 158 to 178, 202 to 224, and 266 to 286; these read WPLL…GCAM, WEAV…ILPL, FFAI…PMAF, DTVP…SVAY, FGRF…YVWI, and HNNW…LLAG.

The protein belongs to the UbiA prenyltransferase family. Requires Mg(2+) as cofactor.

Its subcellular location is the cell inner membrane. It carries out the reaction all-trans-octaprenyl diphosphate + 4-hydroxybenzoate = 4-hydroxy-3-(all-trans-octaprenyl)benzoate + diphosphate. It participates in cofactor biosynthesis; ubiquinone biosynthesis. In terms of biological role, catalyzes the prenylation of para-hydroxybenzoate (PHB) with an all-trans polyprenyl group. Mediates the second step in the final reaction sequence of ubiquinone-8 (UQ-8) biosynthesis, which is the condensation of the polyisoprenoid side chain with PHB, generating the first membrane-bound Q intermediate 3-octaprenyl-4-hydroxybenzoate. The protein is 4-hydroxybenzoate octaprenyltransferase of Burkholderia orbicola (strain MC0-3).